We begin with the raw amino-acid sequence, 565 residues long: Phosphoenolpyruvate-protein phosphotransferase (565 aa).

Residue His-191 is the Tele-phosphohistidine intermediate of the active site. Phosphoenolpyruvate-binding residues include Arg-289 and Arg-325. Residues Glu-427 and Asp-451 each contribute to the Mg(2+) site. Phosphoenolpyruvate contacts are provided by residues 450–451 (ND) and Arg-461. The Proton donor role is filled by Cys-498.

It belongs to the PEP-utilizing enzyme family. Homodimer. The cofactor is Mg(2+).

Its subcellular location is the cytoplasm. The enzyme catalyses L-histidyl-[protein] + phosphoenolpyruvate = N(pros)-phospho-L-histidyl-[protein] + pyruvate. Functionally, general (non sugar-specific) component of the phosphoenolpyruvate-dependent sugar phosphotransferase system (sugar PTS). This major carbohydrate active-transport system catalyzes the phosphorylation of incoming sugar substrates concomitantly with their translocation across the cell membrane. Enzyme I transfers the phosphoryl group from phosphoenolpyruvate (PEP) to the phosphoryl carrier protein (HPr). This chain is Phosphoenolpyruvate-protein phosphotransferase (ptsI), found in Haloferax volcanii (strain ATCC 29605 / DSM 3757 / JCM 8879 / NBRC 14742 / NCIMB 2012 / VKM B-1768 / DS2) (Halobacterium volcanii).